Here is a 584-residue protein sequence, read N- to C-terminus: MVSILTQLNDHFAQALEGQFPSDVTLPTPLVVPASNPKFGDFQCNIALPLAKQLGQPPRAIAMEIVDKVNLSEICEPLTIAGPGFINIKLLPDYLGEQLIKLQQNQQLGVSLVKGEERIVVDFSSPNIAKEMHVGHLRSTIIGDCLARVLEFRGYDVLRLNHVGDWGTQFGMLITYLKEVYPEALVTADALDIGDLVTFYKQAKQRFDQDEQFRETSRQAVVALQAGDAKSIKAWQLLCEQSRREFQLIYDCLDITIEERGESFYNPFLPGVVELLQEKDLLVEDNGAQCVFLDGFTNKDGDRLPLIVQKSDGGYNYATTDLAALNYRLNTDGAEKIIYVTDAGQANHFAQFFQVAEKAGILTDPTQVVHVPFGLVKGEDGKKLKTRAGDTIRLKDLLTEAVTRARQDLETRLTAEERSETEEFKTEVAQRVGIGAVKYADLSQNRTSDYVFSFDKMLALQGNTAPYMLYAYARIQSISREGGIDFAQMDSGEIVLTEPTELVLAKNLLQFADVIETVEISLLPNRLCDYLYELSKVFNRFYENCPVLKASDPQRGSRLLLCDLTARTLKLGLSLLGIPVLDRM.

Positions Pro126 to His136 match the 'HIGH' region motif.

The protein belongs to the class-I aminoacyl-tRNA synthetase family. In terms of assembly, monomer.

The protein localises to the cytoplasm. The catalysed reaction is tRNA(Arg) + L-arginine + ATP = L-arginyl-tRNA(Arg) + AMP + diphosphate. This chain is Arginine--tRNA ligase (argS), found in Synechocystis sp. (strain ATCC 27184 / PCC 6803 / Kazusa).